A 417-amino-acid chain; its full sequence is Probable serpin E3 (417 aa).

The N-terminal stretch at 1–24 is a signal peptide; that stretch reads MPQLSASSLFICLWLVDLCHVANS. N50, N106, N140, N147, and N152 each carry an N-linked (GlcNAc...) asparagine glycan.

This sequence belongs to the serpin family.

The protein resides in the secreted. Probable serine protease inhibitor. This chain is Probable serpin E3 (serpine3), found in Danio rerio (Zebrafish).